Reading from the N-terminus, the 597-residue chain is 66 kDa protein (597 aa).

5 disordered regions span residues Val-62–Gln-82, His-160–His-198, Asn-218–Val-315, His-329–Asp-411, and Ser-535–Leu-586. Residues Leu-64–Ser-80 show a composition bias toward polar residues. The segment covering Asn-218 to Leu-234 has biased composition (polar residues). A compositionally biased stretch (low complexity) spans Pro-273–Asn-291. A compositionally biased stretch (polar residues) spans Ser-305 to Val-315. Residues Gln-389–Arg-400 show a composition bias toward basic residues. Residues Ser-535–Phe-574 show a composition bias toward low complexity. Over residues Gly-575–Ser-584 the composition is skewed to polar residues.

This sequence belongs to the tymoviridae protein p69 family.

This is 66 kDa protein from Ononis.